The primary structure comprises 322 residues: Undecaprenyl-phosphate 4-deoxy-4-formamido-L-arabinose transferase (322 aa).

Residues 1-235 lie on the Cytoplasmic side of the membrane; that stretch reads MFEIHPVKKV…TCLTTTPLRM (235 aa). Residues 236 to 256 form a helical membrane-spanning segment; that stretch reads LSLLGSIIAIGGFSIAVLLVI. Topologically, residues 257-269 are periplasmic; the sequence is LRLTFGPQWAAEG. A helical membrane pass occupies residues 270-290; that stretch reads VFMLFAVLFTFIGAQFIGMGL. The Cytoplasmic segment spans residues 291–322; the sequence is LGEYIGRIYTDVRARPRYFVQQVIRPSSKENE.

Belongs to the glycosyltransferase 2 family.

The protein resides in the cell inner membrane. The enzyme catalyses UDP-4-deoxy-4-formamido-beta-L-arabinose + di-trans,octa-cis-undecaprenyl phosphate = 4-deoxy-4-formamido-alpha-L-arabinopyranosyl di-trans,octa-cis-undecaprenyl phosphate + UDP. It participates in glycolipid biosynthesis; 4-amino-4-deoxy-alpha-L-arabinose undecaprenyl phosphate biosynthesis; 4-amino-4-deoxy-alpha-L-arabinose undecaprenyl phosphate from UDP-4-deoxy-4-formamido-beta-L-arabinose and undecaprenyl phosphate: step 1/2. Its pathway is bacterial outer membrane biogenesis; lipopolysaccharide biosynthesis. Its function is as follows. Catalyzes the transfer of 4-deoxy-4-formamido-L-arabinose from UDP to undecaprenyl phosphate. The modified arabinose is attached to lipid A and is required for resistance to polymyxin and cationic antimicrobial peptides. This Shigella flexneri protein is Undecaprenyl-phosphate 4-deoxy-4-formamido-L-arabinose transferase.